A 275-amino-acid chain; its full sequence is Uroporphyrinogen-III synthase (275 aa).

Belongs to the uroporphyrinogen-III synthase family.

It catalyses the reaction hydroxymethylbilane = uroporphyrinogen III + H2O. It functions in the pathway porphyrin-containing compound metabolism; protoporphyrin-IX biosynthesis; coproporphyrinogen-III from 5-aminolevulinate: step 3/4. Functionally, catalyzes cyclization of the linear tetrapyrrole, hydroxymethylbilane, to the macrocyclic uroporphyrinogen III, the fourth step in the heme biosynthetic pathway. This Saccharomyces cerevisiae (strain ATCC 204508 / S288c) (Baker's yeast) protein is Uroporphyrinogen-III synthase.